The primary structure comprises 872 residues: N-acetyltransferase eso1 (872 aa).

The interval methionine 1–arginine 591 is polymerase type-Y. One can recognise a UmuC domain in the interval valine 29–glycine 285. The segment at serine 533–lysine 567 adopts a UBZ3-type zinc-finger fold. Zn(2+)-binding residues include cysteine 540, cysteine 543, histidine 555, and histidine 559. Residues arginine 569 to serine 602 are disordered. Basic residues predominate over residues glutamine 583–serine 595. Residues lysine 592–serine 872 form an acetyltransferase region. The CCHH-type zinc-finger motif lies at valine 653–histidine 677.

This sequence in the C-terminal section; belongs to the acetyltransferase family. ECO subfamily. In the N-terminal section; belongs to the DNA polymerase type-Y family. Interacts with pds5.

It is found in the nucleus. Probable acetyltransferase required for the establishment of sister chromatid cohesion and couple the processes of cohesion and DNA replication to ensure that only sister chromatids become paired together. In contrast to the structural cohesins, the deposition and establishment factors are required only during S phase. The relevance of acetyltransferase function remains unclear. This chain is N-acetyltransferase eso1 (eso1), found in Schizosaccharomyces pombe (strain 972 / ATCC 24843) (Fission yeast).